The chain runs to 256 residues: Hydroxyethylthiazole kinase (256 aa).

Met38 serves as a coordination point for substrate. ATP contacts are provided by Thr114 and Thr159. Gly186 serves as a coordination point for substrate.

Belongs to the Thz kinase family. It depends on Mg(2+) as a cofactor.

The catalysed reaction is 5-(2-hydroxyethyl)-4-methylthiazole + ATP = 4-methyl-5-(2-phosphooxyethyl)-thiazole + ADP + H(+). It participates in cofactor biosynthesis; thiamine diphosphate biosynthesis; 4-methyl-5-(2-phosphoethyl)-thiazole from 5-(2-hydroxyethyl)-4-methylthiazole: step 1/1. Catalyzes the phosphorylation of the hydroxyl group of 4-methyl-5-beta-hydroxyethylthiazole (THZ). This is Hydroxyethylthiazole kinase from Streptococcus agalactiae serotype V (strain ATCC BAA-611 / 2603 V/R).